We begin with the raw amino-acid sequence, 476 residues long: Rifampicin monooxygenase (476 aa).

Residues T12, E31, K32, Q98, L122, and T156 each contribute to the FAD site. The rifampicin site is built by R196 and R213. Residues D277, L290, and N291 each contribute to the FAD site.

It belongs to the rifampicin monooxygenase family. The cofactor is FAD.

The catalysed reaction is rifampicin + NADPH + O2 = rifampicin para-naphthoquinone carboxamide + NADP(+) + H2O + H(+). The enzyme catalyses rifampicin + NADH + O2 = rifampicin para-naphthoquinone carboxamide + NAD(+) + H2O + H(+). It carries out the reaction rifamycin SV + NADPH + O2 = rifamycin SV para-naphthoquinone carboxamide + NADP(+) + H2O. It catalyses the reaction rifamycin SV + NADH + O2 = rifamycin SV para-naphthoquinone carboxamide + NAD(+) + H2O. In terms of biological role, monooxygenase that can modify rifampicin, thereby inactivating its antibiotic activity. Inactivates a broad range of rifamycin antibiotics. This Streptomyces venezuelae (strain ATCC 10712 / CBS 650.69 / DSM 40230 / JCM 4526 / NBRC 13096 / PD 04745) protein is Rifampicin monooxygenase.